Consider the following 258-residue polypeptide: Cytochrome c oxidase subunit 2 (258 aa).

At 1-41 the chain is on the mitochondrial intermembrane side; sequence MIVNECLFFTIALCDAAEPWQLGFQDAATPMMQGIIDLHHD. A helical transmembrane segment spans residues 42 to 58; that stretch reads ILFFLILILVFVLWILV. The Mitochondrial matrix segment spans residues 59 to 82; the sequence is RALWHFYYKKNPIPQRIVHGTTIE. A helical transmembrane segment spans residues 83–104; it reads ILWTIFPSIILMFIAIPSFALL. The Mitochondrial intermembrane portion of the chain corresponds to 105 to 258; that stretch reads YSMDEVVVDP…VSNLFIPPTS (154 aa). Cu cation is bound by residues histidine 187, cysteine 222, glutamate 224, cysteine 226, histidine 230, and methionine 233. Position 224 (glutamate 224) interacts with Mg(2+).

This sequence belongs to the cytochrome c oxidase subunit 2 family. As to quaternary structure, component of the cytochrome c oxidase (complex IV, CIV), a multisubunit enzyme composed of a catalytic core of 3 subunits and several supernumerary subunits. The complex exists as a monomer or a dimer and forms supercomplexes (SCs) in the inner mitochondrial membrane with ubiquinol-cytochrome c oxidoreductase (cytochrome b-c1 complex, complex III, CIII). It depends on Cu cation as a cofactor.

It is found in the mitochondrion inner membrane. It catalyses the reaction 4 Fe(II)-[cytochrome c] + O2 + 8 H(+)(in) = 4 Fe(III)-[cytochrome c] + 2 H2O + 4 H(+)(out). Functionally, component of the cytochrome c oxidase, the last enzyme in the mitochondrial electron transport chain which drives oxidative phosphorylation. The respiratory chain contains 3 multisubunit complexes succinate dehydrogenase (complex II, CII), ubiquinol-cytochrome c oxidoreductase (cytochrome b-c1 complex, complex III, CIII) and cytochrome c oxidase (complex IV, CIV), that cooperate to transfer electrons derived from NADH and succinate to molecular oxygen, creating an electrochemical gradient over the inner membrane that drives transmembrane transport and the ATP synthase. Cytochrome c oxidase is the component of the respiratory chain that catalyzes the reduction of oxygen to water. Electrons originating from reduced cytochrome c in the intermembrane space (IMS) are transferred via the dinuclear copper A center (CU(A)) of subunit 2 and heme A of subunit 1 to the active site in subunit 1, a binuclear center (BNC) formed by heme A3 and copper B (CU(B)). The BNC reduces molecular oxygen to 2 water molecules using 4 electrons from cytochrome c in the IMS and 4 protons from the mitochondrial matrix. In Oenothera berteroana (Bertero's evening primrose), this protein is Cytochrome c oxidase subunit 2 (COX2).